The primary structure comprises 197 residues: Probable GTP-binding protein EngB (197 aa).

Residues 22 to 195 (NLPEIAFVGR…VDYLFDDLVE (174 aa)) enclose the EngB-type G domain. Residues 30–37 (GRSNVGKS), 57–61 (GKTRL), 75–78 (DLPG), 142–145 (TKSD), and 174–176 (FSS) contribute to the GTP site. Mg(2+)-binding residues include Ser-37 and Thr-59.

Belongs to the TRAFAC class TrmE-Era-EngA-EngB-Septin-like GTPase superfamily. EngB GTPase family. It depends on Mg(2+) as a cofactor.

Functionally, necessary for normal cell division and for the maintenance of normal septation. In Clostridium perfringens (strain 13 / Type A), this protein is Probable GTP-binding protein EngB.